The sequence spans 205 residues: Probable inactive peroxygenase-like protein (205 aa).

Positions 79–88 (PVQLFGYILP) match the Proline-knot motif. Residue S183 is modified to Phosphoserine.

It belongs to the caleosin family.

The protein resides in the lipid droplet. The polypeptide is Probable inactive peroxygenase-like protein (Arabidopsis thaliana (Mouse-ear cress)).